A 348-amino-acid polypeptide reads, in one-letter code: Putative transport protein HP_0567 (348 aa).

The next 8 membrane-spanning stretches (helical) occupy residues 6 to 26, 27 to 47, 56 to 76, 143 to 163, 194 to 214, 224 to 244, 266 to 286, and 300 to 320; these read FFWI…QDFL, MDAL…VFLD, SFLC…FIVY, LKLI…FYYG, IVLL…GVMI, LGIL…LIWI, SILL…IVFI, and MLIF…GIIV.

This sequence belongs to the autoinducer-2 exporter (AI-2E) (TC 2.A.86) family.

Its subcellular location is the cell membrane. The sequence is that of Putative transport protein HP_0567 from Helicobacter pylori (strain ATCC 700392 / 26695) (Campylobacter pylori).